Reading from the N-terminus, the 379-residue chain is tRNA-specific 2-thiouridylase MnmA (379 aa).

Residues 16–23 (GLSGGVDS) and methionine 42 each bind ATP. An interaction with target base in tRNA region spans residues 102–104 (NPD). The Nucleophile role is filled by cysteine 107. A disulfide bridge links cysteine 107 with cysteine 204. Position 131 (glycine 131) interacts with ATP. Residues 154–156 (KDQ) form an interaction with tRNA region. Cysteine 204 serves as the catalytic Cysteine persulfide intermediate. Positions 316–317 (RY) are interaction with tRNA.

It belongs to the MnmA/TRMU family.

It localises to the cytoplasm. It carries out the reaction S-sulfanyl-L-cysteinyl-[protein] + uridine(34) in tRNA + AH2 + ATP = 2-thiouridine(34) in tRNA + L-cysteinyl-[protein] + A + AMP + diphosphate + H(+). Functionally, catalyzes the 2-thiolation of uridine at the wobble position (U34) of tRNA, leading to the formation of s(2)U34. In Hydrogenovibrio crunogenus (strain DSM 25203 / XCL-2) (Thiomicrospira crunogena), this protein is tRNA-specific 2-thiouridylase MnmA.